Consider the following 321-residue polypeptide: Epoxyqueuosine reductase (321 aa).

Asp-137 functions as the Proton donor in the catalytic mechanism. The 33-residue stretch at 179–211 folds into the 4Fe-4S ferredoxin-type domain; sequence EPLNADPPARSLCGRCSACIDACPTHAIREPFV. [4Fe-4S] cluster contacts are provided by Cys-191, Cys-194, Cys-197, Cys-201, Cys-217, Cys-245, Cys-248, and Cys-252.

Belongs to the QueG family. As to quaternary structure, monomer. The cofactor is cob(II)alamin. [4Fe-4S] cluster serves as cofactor.

It is found in the cytoplasm. The catalysed reaction is epoxyqueuosine(34) in tRNA + AH2 = queuosine(34) in tRNA + A + H2O. It participates in tRNA modification; tRNA-queuosine biosynthesis. Functionally, catalyzes the conversion of epoxyqueuosine (oQ) to queuosine (Q), which is a hypermodified base found in the wobble positions of tRNA(Asp), tRNA(Asn), tRNA(His) and tRNA(Tyr). The chain is Epoxyqueuosine reductase from Synechococcus sp. (strain CC9605).